A 459-amino-acid polypeptide reads, in one-letter code: Cyclooctat-9-en-7-ol 5-monooxygenase (459 aa).

Residues 1 to 27 are disordered; the sequence is MRERGPVTPAKSSAPPERPWTTGTAPG. Cys408 serves as a coordination point for heme.

This sequence belongs to the cytochrome P450 family. Heme serves as cofactor.

The enzyme catalyses cyclooctat-9-en-7-ol + AH2 + O2 = cyclooctat-9-ene-5,7-diol + A + H2O. Involved in the biosynthesis of cyclooctatin, a potent inhibitor of lysophospholipase. Catalyzes the stereospecific hydroxylation of cyclooctat-9-en-7-ol to form cyclooctat-9-ene-5,7-diol. The protein is Cyclooctat-9-en-7-ol 5-monooxygenase of Streptomyces melanosporofaciens.